Consider the following 157-residue polypeptide: 2-C-methyl-D-erythritol 2,4-cyclodiphosphate synthase (157 aa).

Residues Asp8 and His10 each contribute to the a divalent metal cation site. Residues 8–10 (DVH) and 34–35 (HS) contribute to the 4-CDP-2-C-methyl-D-erythritol 2-phosphate site. His42 is an a divalent metal cation binding site. Residues 56-58 (DIG), 132-135 (TTNE), and Arg142 each bind 4-CDP-2-C-methyl-D-erythritol 2-phosphate.

Belongs to the IspF family. As to quaternary structure, homotrimer. A divalent metal cation serves as cofactor.

It carries out the reaction 4-CDP-2-C-methyl-D-erythritol 2-phosphate = 2-C-methyl-D-erythritol 2,4-cyclic diphosphate + CMP. Its pathway is isoprenoid biosynthesis; isopentenyl diphosphate biosynthesis via DXP pathway; isopentenyl diphosphate from 1-deoxy-D-xylulose 5-phosphate: step 4/6. Its function is as follows. Involved in the biosynthesis of isopentenyl diphosphate (IPP) and dimethylallyl diphosphate (DMAPP), two major building blocks of isoprenoid compounds. Catalyzes the conversion of 4-diphosphocytidyl-2-C-methyl-D-erythritol 2-phosphate (CDP-ME2P) to 2-C-methyl-D-erythritol 2,4-cyclodiphosphate (ME-CPP) with a corresponding release of cytidine 5-monophosphate (CMP). The protein is 2-C-methyl-D-erythritol 2,4-cyclodiphosphate synthase of Prosthecochloris aestuarii (strain DSM 271 / SK 413).